Consider the following 406-residue polypeptide: Enoyl-[acyl-carrier-protein] reductase [NADH] (406 aa).

Residues 48-53 (GASTGF), 74-75 (FE), 111-112 (DA), and 140-141 (IA) each bind NAD(+). Residue Y226 participates in substrate binding. The Proton donor role is filled by Y236. NAD(+)-binding positions include K245 and 275–277 (LVT).

It belongs to the TER reductase family. Monomer.

It catalyses the reaction a 2,3-saturated acyl-[ACP] + NAD(+) = a (2E)-enoyl-[ACP] + NADH + H(+). It functions in the pathway lipid metabolism; fatty acid biosynthesis. In terms of biological role, involved in the final reduction of the elongation cycle of fatty acid synthesis (FAS II). Catalyzes the reduction of a carbon-carbon double bond in an enoyl moiety that is covalently linked to an acyl carrier protein (ACP). In Coxiella burnetii (strain CbuK_Q154) (Coxiella burnetii (strain Q154)), this protein is Enoyl-[acyl-carrier-protein] reductase [NADH].